The chain runs to 374 residues: Probable tuliposide A-converting enzyme b6, amyloplastic (374 aa).

Residues 1 to 68 (MSVALFCGPP…TNSSLSPSPT (68 aa)) constitute an amyloplast transit peptide. The active-site Acyl-ester intermediate is S226. Residues D316 and H348 each act as charge relay system in the active site.

Belongs to the AB hydrolase superfamily. Homodimer.

Its subcellular location is the plastid. It is found in the amyloplast. It carries out the reaction 6-tuliposide A = tulipalin A + D-glucose. Lactone-forming carboxylesterases, specifically catalyzing intramolecular transesterification, but not hydrolysis. Involved in the biosynthesis of tulipalins, defensive chemicals that show antimicrobial activities against a broad range of strains of bacteria and fungi. Substrates are 6-tuliposide A &gt; 6-tuliposide B. The polypeptide is Probable tuliposide A-converting enzyme b6, amyloplastic (TCEA-B6) (Tulipa gesneriana (Garden tulip)).